Consider the following 268-residue polypeptide: Taurine import ATP-binding protein TauB (268 aa).

In terms of domain architecture, ABC transporter spans 4–236 (LSINNLSMRF…LGVDSDLREV (233 aa)). An ATP-binding site is contributed by 41–48 (GPSGCGKT).

Belongs to the ABC transporter superfamily. Taurine importer (TC 3.A.1.17.1) family. In terms of assembly, the complex is composed of two ATP-binding proteins (TauB), two transmembrane proteins (TauC) and a solute-binding protein (TauA).

Its subcellular location is the cell inner membrane. The catalysed reaction is taurine(out) + ATP + H2O = taurine(in) + ADP + phosphate + H(+). Part of the ABC transporter complex TauABC involved in taurine import. Responsible for energy coupling to the transport system. This chain is Taurine import ATP-binding protein TauB, found in Roseobacter denitrificans (strain ATCC 33942 / OCh 114) (Erythrobacter sp. (strain OCh 114)).